The following is a 274-amino-acid chain: Cytochrome b-c1 complex subunit Rieske, mitochondrial (274 aa).

The Mitochondrial matrix segment spans residues 79-103; the sequence is SHTDVKVPDFYDYRRLEVLDSTKSS. Residues 104 to 140 form a helical membrane-spanning segment; that stretch reads RESSEARKGFSYLVTAVTTVGVAYAAKNVVTQFISSM. At 141-274 the chain is on the mitochondrial intermembrane side; sequence SASADVLAMA…FTGDDVVVVG (134 aa). Residues 187–272 form the Rieske domain; that stretch reads EAAVELSQLR…YEFTGDDVVV (86 aa). [2Fe-2S] cluster contacts are provided by cysteine 217, histidine 219, cysteine 236, histidine 239, and serine 241. A disulfide bridge connects residues cysteine 222 and cysteine 238.

This sequence belongs to the Rieske iron-sulfur protein family. As to quaternary structure, component of the ubiquinol-cytochrome c oxidoreductase (cytochrome b-c1 complex, complex III, CIII), a multisubunit enzyme composed of 11 subunits. The complex is composed of 3 respiratory subunits cytochrome b, cytochrome c1 and Rieske protein UQCRFS1, 2 core protein subunits UQCRC1/QCR1 and UQCRC2/QCR2, and 6 low-molecular weight protein subunits UQCRH/QCR6, UQCRB/QCR7, UQCRQ/QCR8, UQCR10/QCR9, UQCR11/QCR10 and subunit 9, the cleavage product of Rieske protein UQCRFS1. The complex exists as an obligatory dimer and forms supercomplexes (SCs) in the inner mitochondrial membrane with NADH-ubiquinone oxidoreductase (complex I, CI) and cytochrome c oxidase (complex IV, CIV), resulting in different assemblies (supercomplex SCI(1)III(2)IV(1) and megacomplex MCI(2)III(2)IV(2)). Incorporation of the Rieske protein UQCRFS1 is the penultimate step in complex III assembly. Interacts with TTC19, which is involved in the clearance of UQCRFS1 fragments. In terms of assembly, component of the ubiquinol-cytochrome c oxidoreductase (cytochrome b-c1 complex, complex III, CIII). Subunit 9 corresponds to the mitochondrial targeting sequence (MTS) of Rieske protein UQCRFS1. It is retained after processing and incorporated inside complex III, where it remains bound to the complex and localizes between the 2 core subunits UQCRC1/QCR1 and UQCRC2/QCR2. The cofactor is [2Fe-2S] cluster. In terms of processing, proteolytic processing is necessary for the correct insertion of UQCRFS1 in the complex III dimer. Several fragments are generated during UQCRFS1 insertion, most probably due to the endogenous matrix-processing peptidase (MPP) activity of the 2 core protein subunits UQCRC1/QCR1 and UQCRC2/QCR2, which are homologous to the 2 mitochondrial-processing peptidase (MPP) subunits beta-MPP and alpha-MPP respectively. The action of the protease is also necessary for the clearance of the UQCRFS1 fragments.

It localises to the mitochondrion inner membrane. It carries out the reaction a quinol + 2 Fe(III)-[cytochrome c](out) = a quinone + 2 Fe(II)-[cytochrome c](out) + 2 H(+)(out). In terms of biological role, component of the ubiquinol-cytochrome c oxidoreductase, a multisubunit transmembrane complex that is part of the mitochondrial electron transport chain which drives oxidative phosphorylation. The respiratory chain contains 3 multisubunit complexes succinate dehydrogenase (complex II, CII), ubiquinol-cytochrome c oxidoreductase (cytochrome b-c1 complex, complex III, CIII) and cytochrome c oxidase (complex IV, CIV), that cooperate to transfer electrons derived from NADH and succinate to molecular oxygen, creating an electrochemical gradient over the inner membrane that drives transmembrane transport and the ATP synthase. The cytochrome b-c1 complex catalyzes electron transfer from ubiquinol to cytochrome c, linking this redox reaction to translocation of protons across the mitochondrial inner membrane, with protons being carried across the membrane as hydrogens on the quinol. In the process called Q cycle, 2 protons are consumed from the matrix, 4 protons are released into the intermembrane space and 2 electrons are passed to cytochrome c. The Rieske protein is a catalytic core subunit containing a [2Fe-2S] iron-sulfur cluster. It cycles between 2 conformational states during catalysis to transfer electrons from the quinol bound in the Q(0) site in cytochrome b to cytochrome c1. Incorporation of UQCRFS1 is the penultimate step in complex III assembly. Component of the ubiquinol-cytochrome c oxidoreductase (cytochrome b-c1 complex, complex III, CIII). UQCRFS1 undergoes proteolytic processing once it is incorporated in the complex III dimer. One of the fragments, called subunit 9, corresponds to its mitochondrial targeting sequence (MTS). The proteolytic processing is necessary for the correct insertion of UQCRFS1 in the complex III dimer, but the persistence of UQCRFS1-derived fragments may prevent newly imported UQCRFS1 to be processed and assembled into complex III and is detrimental for the complex III structure and function. This chain is Cytochrome b-c1 complex subunit Rieske, mitochondrial (UQCRFS1), found in Chlorocebus aethiops (Green monkey).